The following is a 428-amino-acid chain: Histidine--tRNA ligase (428 aa).

Belongs to the class-II aminoacyl-tRNA synthetase family. Homodimer.

The protein resides in the cytoplasm. It carries out the reaction tRNA(His) + L-histidine + ATP = L-histidyl-tRNA(His) + AMP + diphosphate + H(+). The polypeptide is Histidine--tRNA ligase (Sorangium cellulosum (strain So ce56) (Polyangium cellulosum (strain So ce56))).